A 273-amino-acid polypeptide reads, in one-letter code: Dermonecrotic toxin LapSicTox-alphaIB1ai (273 aa).

His5 is a catalytic residue. Glu25 and Asp27 together coordinate Mg(2+). The Nucleophile role is filled by His41. 2 cysteine pairs are disulfide-bonded: Cys45-Cys51 and Cys47-Cys190. Asp85 lines the Mg(2+) pocket. A glycan (N-linked (GlcNAc...) asparagine) is linked at Asn250.

The protein belongs to the arthropod phospholipase D family. Class II subfamily. Requires Mg(2+) as cofactor. Expressed by the venom gland.

The protein localises to the secreted. The enzyme catalyses an N-(acyl)-sphingosylphosphocholine = an N-(acyl)-sphingosyl-1,3-cyclic phosphate + choline. It catalyses the reaction an N-(acyl)-sphingosylphosphoethanolamine = an N-(acyl)-sphingosyl-1,3-cyclic phosphate + ethanolamine. The catalysed reaction is a 1-acyl-sn-glycero-3-phosphocholine = a 1-acyl-sn-glycero-2,3-cyclic phosphate + choline. It carries out the reaction a 1-acyl-sn-glycero-3-phosphoethanolamine = a 1-acyl-sn-glycero-2,3-cyclic phosphate + ethanolamine. Dermonecrotic toxins cleave the phosphodiester linkage between the phosphate and headgroup of certain phospholipids (sphingolipid and lysolipid substrates), forming an alcohol (often choline) and a cyclic phosphate. This toxin acts on sphingomyelin (SM). It may also act on ceramide phosphoethanolamine (CPE), lysophosphatidylcholine (LPC) and lysophosphatidylethanolamine (LPE), but not on lysophosphatidylserine (LPS), and lysophosphatidylglycerol (LPG). It acts by transphosphatidylation, releasing exclusively cyclic phosphate products as second products. Induces dermonecrosis, hemolysis, increased vascular permeability, edema, inflammatory response, and platelet aggregation. The protein is Dermonecrotic toxin LapSicTox-alphaIB1ai of Loxosceles apachea (Apache recluse spider).